The primary structure comprises 1833 residues: Protein TIC 214 (1833 aa).

Helical transmembrane passes span 18–38 (IINS…FSIG), 67–87 (FIMG…HLAL), 90–110 (PHTI…WNNH), 127–147 (LSIQ…YFIL), 175–195 (VGWL…LVWI), and 218–238 (IFSI…PSPI). Residues 254-301 (EETNLEIEKTSETKETKQEEEGFTEEDPSPSLFSEEKEDPDKIDETEK) are disordered. 2 stretches are compositionally biased toward basic and acidic residues: residues 259–273 (EIEK…KQEE) and 292–301 (DPDKIDETEK).

It belongs to the TIC214 family. In terms of assembly, part of the Tic complex.

The protein localises to the plastid. The protein resides in the chloroplast inner membrane. Involved in protein precursor import into chloroplasts. May be part of an intermediate translocation complex acting as a protein-conducting channel at the inner envelope. The polypeptide is Protein TIC 214 (Spinacia oleracea (Spinach)).